Consider the following 486-residue polypeptide: Ribosomal RNA small subunit methyltransferase F (486 aa).

Residues 124–130, E148, D175, and D193 contribute to the S-adenosyl-L-methionine site; that span reads ASAPGSK. C246 (nucleophile) is an active-site residue.

It belongs to the class I-like SAM-binding methyltransferase superfamily. RsmB/NOP family.

It is found in the cytoplasm. It catalyses the reaction cytidine(1407) in 16S rRNA + S-adenosyl-L-methionine = 5-methylcytidine(1407) in 16S rRNA + S-adenosyl-L-homocysteine + H(+). Functionally, specifically methylates the cytosine at position 1407 (m5C1407) of 16S rRNA. The chain is Ribosomal RNA small subunit methyltransferase F from Shewanella baltica (strain OS155 / ATCC BAA-1091).